Reading from the N-terminus, the 115-residue chain is Putative membrane protein insertion efficiency factor (115 aa).

This sequence belongs to the UPF0161 family.

It localises to the cell membrane. In terms of biological role, could be involved in insertion of integral membrane proteins into the membrane. This chain is Putative membrane protein insertion efficiency factor, found in Mycolicibacterium paratuberculosis (strain ATCC BAA-968 / K-10) (Mycobacterium paratuberculosis).